The sequence spans 228 residues: Probable septum site-determining protein MinC (228 aa).

This sequence belongs to the MinC family. In terms of assembly, interacts with MinD and FtsZ.

Functionally, cell division inhibitor that blocks the formation of polar Z ring septums. Rapidly oscillates between the poles of the cell to destabilize FtsZ filaments that have formed before they mature into polar Z rings. Prevents FtsZ polymerization. The polypeptide is Probable septum site-determining protein MinC (Bacillus mycoides (strain KBAB4) (Bacillus weihenstephanensis)).